A 299-amino-acid chain; its full sequence is GTP cyclohydrolase FolE2 (299 aa).

Belongs to the GTP cyclohydrolase IV family.

The enzyme catalyses GTP + H2O = 7,8-dihydroneopterin 3'-triphosphate + formate + H(+). The protein operates within cofactor biosynthesis; 7,8-dihydroneopterin triphosphate biosynthesis; 7,8-dihydroneopterin triphosphate from GTP: step 1/1. Converts GTP to 7,8-dihydroneopterin triphosphate. The polypeptide is GTP cyclohydrolase FolE2 (Citrobacter koseri (strain ATCC BAA-895 / CDC 4225-83 / SGSC4696)).